A 659-amino-acid chain; its full sequence is Cyclic-di-AMP phosphodiesterase GdpP (659 aa).

At M1 to P8 the chain is on the cytoplasmic side. Helical transmembrane passes span L9–F29 and Y30–I50. Residues K51 to R659 lie on the Cytoplasmic side of the membrane. Positions P84–K149 are PAS-like domain, required for heme-binding. One can recognise a GGDEF domain in the interval E173–P301. Residues N339–I496 form a DHH domain region. Residues H345, D349, D351, D420, H444, and D499 each contribute to the Mn(2+) site. Residues F591 to K646 form a DHHA1 domain region.

This sequence belongs to the GdpP/PdeA phosphodiesterase family. The cofactor is heme b. Mg(2+) is required as a cofactor. It depends on Mn(2+) as a cofactor.

The protein localises to the cell membrane. The catalysed reaction is 3',3'-c-di-AMP + H2O = 5'-O-phosphonoadenylyl-(3'-&gt;5')-adenosine + H(+). Phosphodiesterase (PDE) inhibited by Zn(2+), Ca(2+) inhibits in the presence of Mg(2+) but not Mn(2+); c-di-AMP PDE activity is competitively inhibited by ppGpp. Heme binding (by Fe(2+) or Fe(3+) heme) inhibits PDE, activity is partially restored by KCN or NO only for Fe(2+) heme. Binding of NO to Fe(2+) heme switches from hexa- to pentacoordination. Heme binding inhibits the ATPase activity. In terms of biological role, has phosphodiesterase (PDE) activity against cyclic-di-AMP (c-di-AMP) and to a much lesser extent against cyclic-di-GMP (c-di-GMP) in the DHH/DHHA1 domains. Also has ATPase activity, probably via the GGDEF domain. Overexpression leads to increased sensitivity to methyl methanesulfonate (MMS) and H(2)O(2). Overexpression leads to extreme sensitivity to the beta-lactam antibiotic cefuroxime (CEF), probably dependent on PDE activity. May monitor cellular heme or NO levels. In B.subtilis c-di-AMP is a second messenger that mediates growth, DNA repair and cell wall homeostasis; it is toxic when present in excess. In Bacillus subtilis (strain 168), this protein is Cyclic-di-AMP phosphodiesterase GdpP.